The chain runs to 1997 residues: Otoferlin (1997 aa).

The C2 1 domain occupies 1-98; sequence MALLIHLKTV…VEESHVEVTD (98 aa). The Cytoplasmic segment spans residues 1–1963; sequence MALLIHLKTV…ARYFLWHTYR (1963 aa). The segment at 128–171 is disordered; the sequence is WDDGDFLGDESLQEEEKDSQETDGLLPGSRPSSRPPGEKSFRRA. The span at 129-145 shows a compositional bias: acidic residues; sequence DDGDFLGDESLQEEEKD. 2 C2 domains span residues 236-357 and 400-531; these read KRSK…HKWA and IEGN…FLPT. Residues 642-694 are disordered; sequence NEVDGLSRPQRPRPRKEPGDEEEVDLIQNASDDEAGDAGDLASVSSTPPMRPQ. The segment covering 660 to 678 has biased composition (acidic residues); it reads GDEEEVDLIQNASDDEAGD. A coiled-coil region spans residues 792–821; that stretch reads RERLKSCMRELENMGQQARMLRAQVKRHTV. C2 domains lie at 944–1069 and 1115–1242; these read LHAF…PPRF and DRGP…PSWN. 5 residues coordinate Ca(2+): Asp-976, Asp-982, Asp-1038, Asp-1040, and Asp-1046. 2 disordered regions span residues 1299 to 1324 and 1343 to 1405; these read AEEE…PDES and LRQQ…KPKI. 2 stretches are compositionally biased toward acidic residues: residues 1314–1324 and 1352–1361; these read EEPEEEEPDES and DLEEKEEVDN. Residues 1370-1383 are compositionally biased toward basic and acidic residues; the sequence is KGKEKARAAKEEKK. The segment covering 1387–1396 has biased composition (low complexity); sequence QSSGSGQGSE. C2 domains are found at residues 1464–1593 and 1714–1865; these read LPED…ATCG and DMPA…KQCT. Ca(2+) contacts are provided by Asp-1508, Asp-1514, Asp-1563, Asp-1565, Asp-1571, Asp-1836, Ser-1839, and Asp-1842. Residues 1964 to 1984 form a helical membrane-spanning segment; it reads WLLLKLLLLLLLLLLLALFLY. At 1985–1997 the chain is on the extracellular side; sequence SVPGYLVKKILGA.

It belongs to the ferlin family. Interacts with SNAP2; the interaction is direct. Interacts with STX1; the interaction is direct. Interacts with RAB8B. Requires Ca(2+) as cofactor. As to expression, isoform 1 and isoform 3 are found in adult brain. Isoform 2 is expressed in the fetus and in adult brain, heart, placenta, skeletal muscle and kidney.

Its subcellular location is the cytoplasmic vesicle. It is found in the secretory vesicle. The protein resides in the synaptic vesicle membrane. It localises to the basolateral cell membrane. The protein localises to the endoplasmic reticulum membrane. Its subcellular location is the golgi apparatus membrane. It is found in the presynaptic cell membrane. The protein resides in the cell membrane. Functionally, key calcium ion sensor involved in the Ca(2+)-triggered synaptic vesicle-plasma membrane fusion and in the control of neurotransmitter release at these output synapses. Interacts in a calcium-dependent manner to the presynaptic SNARE proteins at ribbon synapses of cochlear inner hair cells (IHCs) to trigger exocytosis of neurotransmitter. Also essential to synaptic exocytosis in immature outer hair cells (OHCs). May also play a role within the recycling of endosomes. The chain is Otoferlin (OTOF) from Homo sapiens (Human).